We begin with the raw amino-acid sequence, 557 residues long: Dihydroxy-acid dehydratase (557 aa).

Asp78 contacts Mg(2+). A [2Fe-2S] cluster-binding site is contributed by Cys119. Residues Asp120 and Lys121 each contribute to the Mg(2+) site. Lys121 carries the post-translational modification N6-carboxylysine. Cys192 lines the [2Fe-2S] cluster pocket. Glu442 serves as a coordination point for Mg(2+). The active-site Proton acceptor is the Ser468.

Belongs to the IlvD/Edd family. In terms of assembly, homodimer. [2Fe-2S] cluster serves as cofactor. It depends on Mg(2+) as a cofactor.

The catalysed reaction is (2R)-2,3-dihydroxy-3-methylbutanoate = 3-methyl-2-oxobutanoate + H2O. It catalyses the reaction (2R,3R)-2,3-dihydroxy-3-methylpentanoate = (S)-3-methyl-2-oxopentanoate + H2O. It participates in amino-acid biosynthesis; L-isoleucine biosynthesis; L-isoleucine from 2-oxobutanoate: step 3/4. It functions in the pathway amino-acid biosynthesis; L-valine biosynthesis; L-valine from pyruvate: step 3/4. Its function is as follows. Functions in the biosynthesis of branched-chain amino acids. Catalyzes the dehydration of (2R,3R)-2,3-dihydroxy-3-methylpentanoate (2,3-dihydroxy-3-methylvalerate) into 2-oxo-3-methylpentanoate (2-oxo-3-methylvalerate) and of (2R)-2,3-dihydroxy-3-methylbutanoate (2,3-dihydroxyisovalerate) into 2-oxo-3-methylbutanoate (2-oxoisovalerate), the penultimate precursor to L-isoleucine and L-valine, respectively. In Bacillus thuringiensis subsp. konkukian (strain 97-27), this protein is Dihydroxy-acid dehydratase.